Consider the following 748-residue polypeptide: Phosphoenolpyruvate-dependent phosphotransferase system (748 aa).

Positions 1 to 127 (MLTRLREIVE…RRQLLGVLVV (127 aa)) constitute a GAF domain. Positions 128-170 (QQRELRQYDESEESFLVTLATQMAAILSQSQVTALFGQYRQTR) are linker. A PTS EI region spans residues 171–748 (IRALPAAPGV…GMGGLIRGGL (578 aa)). The active-site Tele-phosphohistidine intermediate is the His356. Phosphoenolpyruvate contacts are provided by Arg462 and Arg498. Mg(2+) contacts are provided by Glu597 and Asp621. Phosphoenolpyruvate contacts are provided by residues 620–621 (ND) and Arg631. The Proton donor role is filled by Cys668.

Belongs to the PEP-utilizing enzyme family. Mg(2+) serves as cofactor.

The protein resides in the cytoplasm. The catalysed reaction is L-histidyl-[protein] + phosphoenolpyruvate = N(pros)-phospho-L-histidyl-[protein] + pyruvate. Component of the phosphoenolpyruvate-dependent nitrogen-metabolic phosphotransferase system (nitrogen-metabolic PTS), that seems to be involved in regulating nitrogen metabolism. Enzyme I-Ntr transfers the phosphoryl group from phosphoenolpyruvate (PEP) to the phosphoryl carrier protein (NPr). Could function in the transcriptional regulation of sigma-54 dependent operons in conjunction with the NPr (PtsO) and EIIA-Ntr (PtsN) proteins. Enzyme I-Ntr is specific for NPr. The polypeptide is Phosphoenolpyruvate-dependent phosphotransferase system (ptsP) (Salmonella typhimurium (strain LT2 / SGSC1412 / ATCC 700720)).